The following is a 397-amino-acid chain: Lysophospholipid transporter LplT (397 aa).

At 1–17 the chain is on the periplasmic side; that stretch reads MSESVHTNTSLWSKGMK. Residues 18-38 traverse the membrane as a helical segment; the sequence is AVIVAQFLSAFGDNALLFATL. Over 39–52 the chain is Cytoplasmic; that stretch reads ALLKAQFYPEWSQP. A helical transmembrane segment spans residues 53-73; sequence ILQMVFVGAYILFAPFVGQVA. Residues 74–90 are Periplasmic-facing; it reads DSFAKGRVMMFANGLKL. A helical membrane pass occupies residues 91–111; the sequence is LGAASICFGINPFLGYTLVGV. Residues 112–144 lie on the Cytoplasmic side of the membrane; it reads GAAAYSPAKYGILGELTTGSKLVKANGLMEAST. The chain crosses the membrane as a helical span at residues 145–165; that stretch reads IAAILLGSVAGGVLADWHVLV. A topological domain (periplasmic) is located at residue Ala-166. The chain crosses the membrane as a helical span at residues 167–187; it reads LAACALAYGGAVVANIYIPKL. At 188–226 the chain is on the cytoplasmic side; the sequence is AAARPGQSWNLINMTRSFLNACTSLWRNGETRFSLVGTS. The chain crosses the membrane as a helical span at residues 227–247; sequence LFWGAGVTLRFLLVLWVPVAL. Over 248-256 the chain is Periplasmic; that stretch reads GITDNATPT. Residues 257 to 277 form a helical membrane-spanning segment; that stretch reads YLNAMVAIGIVVGAGAAAKLV. Topologically, residues 278-280 are cytoplasmic; sequence TLE. A helical transmembrane segment spans residues 281–301; it reads TVSRCMPAGILIGVVVLIFSL. Residues 302–304 are Periplasmic-facing; it reads QHE. The chain crosses the membrane as a helical span at residues 305–325; that stretch reads LLPAYALLMLIGVMGGFFVVP. At 326–343 the chain is on the cytoplasmic side; that stretch reads LNALLQERGKKSVGAGNA. A helical membrane pass occupies residues 344-364; sequence IAVQNLGENSAMLLMLGIYSL. At 365–366 the chain is on the periplasmic side; it reads AV. The chain crosses the membrane as a helical span at residues 367–387; that stretch reads MVGIPVVPIGIGFGALFALAI. Topologically, residues 388-397 are cytoplasmic; it reads TALWIWQRRH.

This sequence belongs to the major facilitator superfamily. LplT (TC 2.A.1.42) family.

It is found in the cell inner membrane. Its function is as follows. Catalyzes the facilitated diffusion of 2-acyl-glycero-3-phosphoethanolamine (2-acyl-GPE) into the cell. The sequence is that of Lysophospholipid transporter LplT from Escherichia coli (strain ATCC 8739 / DSM 1576 / NBRC 3972 / NCIMB 8545 / WDCM 00012 / Crooks).